The primary structure comprises 634 residues: Endoribonuclease rege-1 (634 aa).

Disordered stretches follow at residues 1 to 33, 90 to 113, and 156 to 223; these read MDSTARGHAPLCRTSNQRGLGTRLNPYYQSTPH, SHPSLSRESSDPSKIDDDQTAPMI, and KMGL…NPDP. Basic and acidic residues predominate over residues 97-106; it reads ESSDPSKIDD. 2 stretches are compositionally biased toward low complexity: residues 182–194 and 201–217; these read SSASSSSASSSSS and SVSIATSSPATSSSTPS. The RNase NYN domain maps to 225-377; the sequence is LRAVVVDGSN…PSGRHGPRIE (153 aa). Position 314 (aspartate 314) interacts with Mg(2+). Residues 387–412 form a C3H1-type zinc finger; it reads SSNPLVCPYARKCTYGNKCKFYHPER.

This sequence belongs to the ZC3H12 family. The cofactor is Mg(2+). In terms of tissue distribution, expressed in the intestinal cells adjacent to the pharynx.

The protein localises to the cytoplasm. In terms of biological role, endonuclease which binds to the 3'UTR of target mRNAs and induces degradation of the transcript. Acts together with rle-1 to repress the expression of the transcription factor ets-4 by binding to the conserved ADE (alternate decay element) and RCE (REGE-1 cleavage element) stem loop structure in its 3'UTR, which controls the expression of genes in the IIS and TORC1 pathways, including those involved in lipid metabolism and autophagosome formation. May play a role in the clearance of apoptotic cell corpses. In Caenorhabditis elegans, this protein is Endoribonuclease rege-1.